The chain runs to 553 residues: Hydroxylamine reductase (553 aa).

[2Fe-2S] cluster is bound by residues cysteine 3, cysteine 6, cysteine 18, and cysteine 25. The hybrid [4Fe-2O-2S] cluster site is built by histidine 252, glutamate 276, cysteine 320, cysteine 408, cysteine 436, cysteine 461, glutamate 495, and lysine 497. At cysteine 408 the chain carries Cysteine persulfide.

Belongs to the HCP family. The cofactor is [2Fe-2S] cluster. Hybrid [4Fe-2O-2S] cluster serves as cofactor.

Its subcellular location is the cytoplasm. The enzyme catalyses A + NH4(+) + H2O = hydroxylamine + AH2 + H(+). Catalyzes the reduction of hydroxylamine to form NH(3) and H(2)O. The sequence is that of Hydroxylamine reductase from Tolumonas auensis (strain DSM 9187 / NBRC 110442 / TA 4).